Reading from the N-terminus, the 429-residue chain is Phosphoribosylamine--glycine ligase (429 aa).

In terms of domain architecture, ATP-grasp spans 109-316 (KDFLARHNIP…LVELCLAACE (208 aa)). 135–196 (LREKGAPIVI…EEFLDGEEAS (62 aa)) lines the ATP pocket. Residues 212–237 (SQDHKRVGDKDTGPNTGGMGAYSPAP) form a disordered region. Positions 213–223 (QDHKRVGDKDT) are enriched in basic and acidic residues. Residues E286 and N288 each contribute to the Mg(2+) site.

It belongs to the GARS family. In terms of assembly, monomer. Mg(2+) is required as a cofactor. Requires Mn(2+) as cofactor.

It carries out the reaction 5-phospho-beta-D-ribosylamine + glycine + ATP = N(1)-(5-phospho-beta-D-ribosyl)glycinamide + ADP + phosphate + H(+). The protein operates within purine metabolism; IMP biosynthesis via de novo pathway; N(1)-(5-phospho-D-ribosyl)glycinamide from 5-phospho-alpha-D-ribose 1-diphosphate: step 2/2. This is Phosphoribosylamine--glycine ligase from Escherichia coli O157:H7.